A 334-amino-acid polypeptide reads, in one-letter code: Holliday junction branch migration complex subunit RuvB (334 aa).

Residues 4–186 are large ATPase domain (RuvB-L); that stretch reads ADRLIAPENP…FGITQRLEYY (183 aa). ATP is bound by residues I25, R26, G67, K70, T71, T72, 133-135, R176, Y186, and R223; that span reads EDY. T71 serves as a coordination point for Mg(2+). The small ATPAse domain (RuvB-S) stretch occupies residues 187–257; sequence KVKDLQDIVQ…TADKALNMLD (71 aa). Residues 260–334 form a head domain (RuvB-H) region; that stretch reads AEGFDYMDRK…RAYLHFGIEK (75 aa). R315 and R320 together coordinate DNA.

It belongs to the RuvB family. Homohexamer. Forms an RuvA(8)-RuvB(12)-Holliday junction (HJ) complex. HJ DNA is sandwiched between 2 RuvA tetramers; dsDNA enters through RuvA and exits via RuvB. An RuvB hexamer assembles on each DNA strand where it exits the tetramer. Each RuvB hexamer is contacted by two RuvA subunits (via domain III) on 2 adjacent RuvB subunits; this complex drives branch migration. In the full resolvosome a probable DNA-RuvA(4)-RuvB(12)-RuvC(2) complex forms which resolves the HJ.

It is found in the cytoplasm. It carries out the reaction ATP + H2O = ADP + phosphate + H(+). In terms of biological role, the RuvA-RuvB-RuvC complex processes Holliday junction (HJ) DNA during genetic recombination and DNA repair, while the RuvA-RuvB complex plays an important role in the rescue of blocked DNA replication forks via replication fork reversal (RFR). RuvA specifically binds to HJ cruciform DNA, conferring on it an open structure. The RuvB hexamer acts as an ATP-dependent pump, pulling dsDNA into and through the RuvAB complex. RuvB forms 2 homohexamers on either side of HJ DNA bound by 1 or 2 RuvA tetramers; 4 subunits per hexamer contact DNA at a time. Coordinated motions by a converter formed by DNA-disengaged RuvB subunits stimulates ATP hydrolysis and nucleotide exchange. Immobilization of the converter enables RuvB to convert the ATP-contained energy into a lever motion, pulling 2 nucleotides of DNA out of the RuvA tetramer per ATP hydrolyzed, thus driving DNA branch migration. The RuvB motors rotate together with the DNA substrate, which together with the progressing nucleotide cycle form the mechanistic basis for DNA recombination by continuous HJ branch migration. Branch migration allows RuvC to scan DNA until it finds its consensus sequence, where it cleaves and resolves cruciform DNA. This chain is Holliday junction branch migration complex subunit RuvB, found in Vibrio campbellii (strain ATCC BAA-1116).